The chain runs to 182 residues: Nucleoside-triphosphatase THEP1 (182 aa).

ATP-binding positions include 10–17 (GRPGIGKT) and 102–109 (VVVIDEIG).

It belongs to the THEP1 NTPase family.

The enzyme catalyses a ribonucleoside 5'-triphosphate + H2O = a ribonucleoside 5'-diphosphate + phosphate + H(+). Functionally, has nucleotide phosphatase activity towards ATP, GTP, CTP, TTP and UTP. May hydrolyze nucleoside diphosphates with lower efficiency. The chain is Nucleoside-triphosphatase THEP1 from Thermofilum pendens (strain DSM 2475 / Hrk 5).